The sequence spans 318 residues: Malate dehydrogenase (318 aa).

Residues 11-17 (GAGGNVG) and aspartate 37 contribute to the NAD(+) site. Residues arginine 86 and arginine 92 each contribute to the substrate site. NAD(+)-binding positions include asparagine 99 and 122 to 124 (VTN). Positions 124 and 155 each coordinate substrate. The active-site Proton acceptor is the histidine 179.

This sequence belongs to the LDH/MDH superfamily. MDH type 3 family.

It catalyses the reaction (S)-malate + NAD(+) = oxaloacetate + NADH + H(+). Its function is as follows. Catalyzes the reversible oxidation of malate to oxaloacetate. This chain is Malate dehydrogenase, found in Nitratiruptor sp. (strain SB155-2).